A 137-amino-acid polypeptide reads, in one-letter code: Protein shisa-5 (137 aa).

Residues 3–23 form a helical membrane-spanning segment; the sequence is FGATLAVGLTIFVLSVVTIII.

This sequence belongs to the shisa family. In terms of assembly, interacts with PDCD6; PDCD6 can stabilize SHISA5.

Its subcellular location is the endoplasmic reticulum membrane. The protein resides in the nucleus membrane. In terms of biological role, can induce apoptosis in a caspase-dependent manner and plays a role in p53/TP53-dependent apoptosis. The polypeptide is Protein shisa-5 (SHISA5) (Pongo abelii (Sumatran orangutan)).